The chain runs to 400 residues: Probable peptidoglycan glycosyltransferase FtsW (400 aa).

Residues 1–24 (MSTGSLPLGLPSRDSLDGLRNSVD) lie on the Cytoplasmic side of the membrane. Residues 25-45 (LPLLAAAALLLGLGLIMVASA) traverse the membrane as a helical segment. The Periplasmic portion of the chain corresponds to 46-63 (SMDLGERYYGNTWHFFQR). The chain crosses the membrane as a helical span at residues 64–84 (QVLFAAIGLALATVMWAIPLE). Over 85 to 88 (RWER) the chain is Cytoplasmic. A helical transmembrane segment spans residues 89–109 (AGPWLLILVMVLLIAVLLPGV). At 110 to 118 (GRTVNGATR) the chain is on the periplasmic side. The helical transmembrane segment at 119–139 (WIPIGMFNLQVAEPVKLLVVM) threads the bilayer. The Cytoplasmic segment spans residues 140–153 (YLAGYIVRHYSALR). A helical transmembrane segment spans residues 154–174 (LHLRGFVRPLVVLGFGTVLLL). Topologically, residues 175–177 (LQP) are periplasmic. A helical membrane pass occupies residues 178 to 198 (DFGGAAIMLAIGMGMLFLAGA). Lys199 is a topological domain (cytoplasmic). Residues 200–220 (LWQFAALGATIAVGMAFVAVA) traverse the membrane as a helical segment. The Periplasmic segment spans residues 221–278 (APYRVARLTAFLDPWQDPFATGFQLTQSLIAIGSGGWFGTGLGNSVQKLFYLPEAHND). Residues 279-299 (FLFAVFAEEFGFIGVLALIAL) form a helical membrane-spanning segment. Residues 300 to 324 (FAVVVWRCVKIGLWAERAGHAFGSH) lie on the Cytoplasmic side of the membrane. The chain crosses the membrane as a helical span at residues 325-345 (LAFGVAIWLALQSALNLAVNM). The Periplasmic segment spans residues 346-354 (GLLPTKGMT). A helical transmembrane segment spans residues 355-375 (LPFLSYGGSSLIVTLMAIGLV). Residues 376 to 400 (MRVYREAQIPAPRQSTPPRRKRGQA) are Cytoplasmic-facing.

The protein belongs to the SEDS family. FtsW subfamily.

It localises to the cell inner membrane. It carries out the reaction [GlcNAc-(1-&gt;4)-Mur2Ac(oyl-L-Ala-gamma-D-Glu-L-Lys-D-Ala-D-Ala)](n)-di-trans,octa-cis-undecaprenyl diphosphate + beta-D-GlcNAc-(1-&gt;4)-Mur2Ac(oyl-L-Ala-gamma-D-Glu-L-Lys-D-Ala-D-Ala)-di-trans,octa-cis-undecaprenyl diphosphate = [GlcNAc-(1-&gt;4)-Mur2Ac(oyl-L-Ala-gamma-D-Glu-L-Lys-D-Ala-D-Ala)](n+1)-di-trans,octa-cis-undecaprenyl diphosphate + di-trans,octa-cis-undecaprenyl diphosphate + H(+). Its pathway is cell wall biogenesis; peptidoglycan biosynthesis. Peptidoglycan polymerase that is essential for cell division. This Thioalkalivibrio sp. (strain K90mix) protein is Probable peptidoglycan glycosyltransferase FtsW.